A 610-amino-acid polypeptide reads, in one-letter code: UvrABC system protein C (610 aa).

A GIY-YIG domain is found at 16–94 (SQPGVYRMYD…IKLYQPRYNV (79 aa)). Positions 204–239 (DQVLTQLIARMEKASQDLAFEEAARIRDQIQAVRRV) constitute a UVR domain.

Belongs to the UvrC family. As to quaternary structure, interacts with UvrB in an incision complex.

It localises to the cytoplasm. The UvrABC repair system catalyzes the recognition and processing of DNA lesions. UvrC both incises the 5' and 3' sides of the lesion. The N-terminal half is responsible for the 3' incision and the C-terminal half is responsible for the 5' incision. The protein is UvrABC system protein C of Salmonella paratyphi A (strain ATCC 9150 / SARB42).